Reading from the N-terminus, the 218-residue chain is Probable cutinase 3 (218 aa).

The first 17 residues, 1–17, serve as a signal peptide directing secretion; the sequence is MSLRSVLVAALAALAVA. Intrachain disulfides connect cysteine 41/cysteine 120 and cysteine 67/cysteine 81. Serine 131 functions as the Nucleophile in the catalytic mechanism. Cysteine 182 and cysteine 189 form a disulfide bridge. Aspartate 186 is a catalytic residue. Histidine 199 (proton donor/acceptor) is an active-site residue.

The protein belongs to the cutinase family.

It is found in the secreted. The catalysed reaction is cutin + H2O = cutin monomers.. Catalyzes the hydrolysis of complex carboxylic polyesters found in the cell wall of plants. Degrades cutin, a macromolecule that forms the structure of the plant cuticle. The sequence is that of Probable cutinase 3 from Aspergillus terreus (strain NIH 2624 / FGSC A1156).